Here is a 237-residue protein sequence, read N- to C-terminus: MIILPAIDIIDGQAVRLYQGDYNKKEVVANDIFNIAKEFECLGAEYIHLVDLDGAKSGYCVNEKIILKLAQTVDVPIEVGGGIRNFETIEKLIENGISRVILGTIAMEDEGLLKKAIECYGEKISVGIDCKNGYVYGRGWLAESKLNYLDFAKNMESLGVKSIIVTDISKDGTLEGPNFDMLMKLKKLVNIDITASGGIRDIENIKELKNIDIYGAITGKAIYSGNLSLKEAIDITR.

Asp8 serves as the catalytic Proton acceptor. Asp129 serves as the catalytic Proton donor.

It belongs to the HisA/HisF family.

It localises to the cytoplasm. It carries out the reaction 1-(5-phospho-beta-D-ribosyl)-5-[(5-phospho-beta-D-ribosylamino)methylideneamino]imidazole-4-carboxamide = 5-[(5-phospho-1-deoxy-D-ribulos-1-ylimino)methylamino]-1-(5-phospho-beta-D-ribosyl)imidazole-4-carboxamide. It participates in amino-acid biosynthesis; L-histidine biosynthesis; L-histidine from 5-phospho-alpha-D-ribose 1-diphosphate: step 4/9. This chain is 1-(5-phosphoribosyl)-5-[(5-phosphoribosylamino)methylideneamino] imidazole-4-carboxamide isomerase, found in Clostridium botulinum (strain Alaska E43 / Type E3).